The chain runs to 176 residues: MGRRGVTVWFTGLSGAGKTTLSCGVAQQLQALGLPVEVLDGDLVRQHLSKELGFSRADRDENVRRIGFVAEMLTRHGVIVLVSAISPYRATRQEVRQQIGNFIEVFVDAPLEVCEQRDVKGLYRKARAGLIRHFTGIDDPYEPPEYPEVVCKTAEQSISECIDLVMQSLRSHGYLQ.

ATP is bound at residue 12-19 (GLSGAGKT). Serine 86 (phosphoserine intermediate) is an active-site residue.

The protein belongs to the APS kinase family.

The catalysed reaction is adenosine 5'-phosphosulfate + ATP = 3'-phosphoadenylyl sulfate + ADP + H(+). It functions in the pathway sulfur metabolism; hydrogen sulfide biosynthesis; sulfite from sulfate: step 2/3. Catalyzes the synthesis of activated sulfate. This is Adenylyl-sulfate kinase from Synechococcus sp. (strain JA-3-3Ab) (Cyanobacteria bacterium Yellowstone A-Prime).